The primary structure comprises 270 residues: Transmembrane protein 176B (270 aa).

4 helical membrane-spanning segments follow: residues 65 to 85, 95 to 115, 127 to 147, and 209 to 229; these read LALG…GVCL, ASGC…GAIV, ISSL…VLCV, and LFLA…GVGL. 4 positions are modified to phosphoserine: serine 236, serine 245, serine 254, and serine 258. A disordered region spans residues 237–270; it reads SQPLNEEGSEKRLLGENSVPPSPSREQTSTAIVL. The span at 260 to 270 shows a compositional bias: polar residues; that stretch reads SREQTSTAIVL.

It belongs to the TMEM176 family. In terms of tissue distribution, expressed in lung and dermal fibroblasts.

Its subcellular location is the nucleus membrane. Its function is as follows. May play a role in the process of maturation of dendritic cells. Required for the development of cerebellar granule cells. This Homo sapiens (Human) protein is Transmembrane protein 176B (TMEM176B).